The chain runs to 125 residues: Large ribosomal subunit protein bL19 (125 aa).

Belongs to the bacterial ribosomal protein bL19 family.

This protein is located at the 30S-50S ribosomal subunit interface and may play a role in the structure and function of the aminoacyl-tRNA binding site. The sequence is that of Large ribosomal subunit protein bL19 from Wolbachia sp. subsp. Brugia malayi (strain TRS).